The following is a 592-amino-acid chain: Arginine--tRNA ligase (592 aa).

The short motif at 112 to 122 (VNPNKELHVGH) is the 'HIGH' region element.

This sequence belongs to the class-I aminoacyl-tRNA synthetase family. In terms of assembly, monomer.

It localises to the cytoplasm. It catalyses the reaction tRNA(Arg) + L-arginine + ATP = L-arginyl-tRNA(Arg) + AMP + diphosphate. The chain is Arginine--tRNA ligase from Thermus thermophilus (strain ATCC BAA-163 / DSM 7039 / HB27).